The primary structure comprises 279 residues: Tryptophan 2,3-dioxygenase (279 aa).

Substrate is bound by residues 48-52, Tyr110, and Arg114; that span reads FIVIH. Heme is bound at residue His237. Thr251 serves as a coordination point for substrate.

Belongs to the tryptophan 2,3-dioxygenase family. In terms of assembly, homotetramer. Heme is required as a cofactor.

The catalysed reaction is L-tryptophan + O2 = N-formyl-L-kynurenine. It functions in the pathway amino-acid degradation; L-tryptophan degradation via kynurenine pathway; L-kynurenine from L-tryptophan: step 1/2. Functionally, heme-dependent dioxygenase that catalyzes the oxidative cleavage of the L-tryptophan (L-Trp) pyrrole ring and converts L-tryptophan to N-formyl-L-kynurenine. Catalyzes the oxidative cleavage of the indole moiety. This is Tryptophan 2,3-dioxygenase from Bacillus cereus (strain ZK / E33L).